The following is a 319-amino-acid chain: Acetyl esterase (319 aa).

An Involved in the stabilization of the negatively charged intermediate by the formation of the oxyanion hole motif is present at residues 91–93 (HGG). Residues Ser-165, Asp-262, and His-292 contribute to the active site.

It belongs to the 'GDXG' lipolytic enzyme family. As to quaternary structure, homodimer. Interacts with MalT and MelA.

The protein resides in the cytoplasm. Its function is as follows. Displays esterase activity towards short chain fatty esters (acyl chain length of up to 8 carbons). Able to hydrolyze triacetylglycerol (triacetin) and tributyrylglycerol (tributyrin), but not trioleylglycerol (triolein) or cholesterol oleate. Negatively regulates MalT activity by antagonizing maltotriose binding. Inhibits MelA galactosidase activity. The protein is Acetyl esterase of Escherichia coli O127:H6 (strain E2348/69 / EPEC).